We begin with the raw amino-acid sequence, 675 residues long: INO80 complex subunit D (675 aa).

Disordered stretches follow at residues 1-39 (MNNNSNNNNNNNIDQKNETTNEITNNTSNNNNIINNVNQ), 183-203 (TGNNNNNTTTTTTTTTTNSTP), 274-324 (LKQK…ERQV), 473-523 (DSNK…KLNK), and 627-675 (VPVT…TMIS). Low complexity-rich tracts occupy residues 282 to 318 (QQLQNQKMFEQSQQQDQQQKPVQQPIQQQQQQDQLQI), 482 to 519 (NNDNNINNNNNNNNNNNNNNNNNNNNNNNNNNNNNNNN), and 634 to 648 (NQNNQNNNNNNTNNS). Residues 664–675 (EILKDSDNTMIS) are compositionally biased toward basic and acidic residues.

It belongs to the INO80D family. In terms of assembly, component of the chromatin-remodeling INO80 complex.

It is found in the nucleus. In terms of biological role, putative regulatory component of the chromatin remodeling INO80 complex which is involved in transcriptional regulation, DNA replication and probably DNA repair. This chain is INO80 complex subunit D, found in Dictyostelium discoideum (Social amoeba).